The primary structure comprises 217 residues: 3-demethoxyubiquinol 3-hydroxylase (217 aa).

Residues E66, E96, H99, E148, E180, and H183 each coordinate Fe cation.

This sequence belongs to the COQ7 family. The cofactor is Fe cation.

The protein localises to the cell membrane. It carries out the reaction a 5-methoxy-2-methyl-3-(all-trans-polyprenyl)benzene-1,4-diol + AH2 + O2 = a 3-demethylubiquinol + A + H2O. It participates in cofactor biosynthesis; ubiquinone biosynthesis. Functionally, catalyzes the hydroxylation of 2-nonaprenyl-3-methyl-6-methoxy-1,4-benzoquinol during ubiquinone biosynthesis. In Xylella fastidiosa (strain 9a5c), this protein is 3-demethoxyubiquinol 3-hydroxylase.